The sequence spans 344 residues: Dihydroorotate dehydrogenase (quinone) (344 aa).

FMN is bound by residues Ala65–Lys69 and Thr89. Lys69 contacts substrate. Residue Asn114–Phe118 participates in substrate binding. FMN-binding residues include Asn145 and Asn178. Asn178 is a substrate binding site. Ser181 (nucleophile) is an active-site residue. Position 183 (Asn183) interacts with substrate. FMN-binding residues include Lys215 and Thr243. Asn244–Thr245 is a substrate binding site. Residues Gly269, Gly298, and Tyr319–Thr320 each bind FMN.

The protein belongs to the dihydroorotate dehydrogenase family. Type 2 subfamily. Monomer. The cofactor is FMN.

The protein resides in the cell membrane. The catalysed reaction is (S)-dihydroorotate + a quinone = orotate + a quinol. It functions in the pathway pyrimidine metabolism; UMP biosynthesis via de novo pathway; orotate from (S)-dihydroorotate (quinone route): step 1/1. Its function is as follows. Catalyzes the conversion of dihydroorotate to orotate with quinone as electron acceptor. The polypeptide is Dihydroorotate dehydrogenase (quinone) (Clavibacter sepedonicus (Clavibacter michiganensis subsp. sepedonicus)).